The primary structure comprises 146 residues: UPF0260 protein VF_1660 (146 aa).

The protein belongs to the UPF0260 family.

The sequence is that of UPF0260 protein VF_1660 from Aliivibrio fischeri (strain ATCC 700601 / ES114) (Vibrio fischeri).